We begin with the raw amino-acid sequence, 266 residues long: MNQRLVYVVSDSGGETAELVVKAAASQFYASPVQVKRVPYVEDKTTLAEVVALAKMNQAIIAFTLVVPEMREFLLTEAAREGVVAYDIIGPLIEKMSDLFQLKPRYEPGQVRVLDEDYFKKIEAIEFAVKYDDGRDPRGILRADIVLIGVSRTSKTPLSQYLAHKRLKVANVPIVPEVEPPEQLFQVGPSKCFGLKISPDKLLSIRRERLKSLGLNDQAIYANMDRIKEELAYFDGVVKKIGCDVIDVTNKAVEETASIIMKKLKR.

149–156 (GVSRTSKT) contacts ADP.

Belongs to the pyruvate, phosphate/water dikinase regulatory protein family. PDRP subfamily.

It carries out the reaction N(tele)-phospho-L-histidyl/L-threonyl-[pyruvate, phosphate dikinase] + ADP = N(tele)-phospho-L-histidyl/O-phospho-L-threonyl-[pyruvate, phosphate dikinase] + AMP + H(+). The enzyme catalyses N(tele)-phospho-L-histidyl/O-phospho-L-threonyl-[pyruvate, phosphate dikinase] + phosphate + H(+) = N(tele)-phospho-L-histidyl/L-threonyl-[pyruvate, phosphate dikinase] + diphosphate. In terms of biological role, bifunctional serine/threonine kinase and phosphorylase involved in the regulation of the pyruvate, phosphate dikinase (PPDK) by catalyzing its phosphorylation/dephosphorylation. The polypeptide is Putative pyruvate, phosphate dikinase regulatory protein (Geobacillus thermodenitrificans (strain NG80-2)).